A 314-amino-acid chain; its full sequence is Ribosomal RNA small subunit methyltransferase H (314 aa).

S-adenosyl-L-methionine-binding positions include 32–34 (GGH), aspartate 52, phenylalanine 79, aspartate 100, and glutamine 107.

It belongs to the methyltransferase superfamily. RsmH family.

Its subcellular location is the cytoplasm. The enzyme catalyses cytidine(1402) in 16S rRNA + S-adenosyl-L-methionine = N(4)-methylcytidine(1402) in 16S rRNA + S-adenosyl-L-homocysteine + H(+). In terms of biological role, specifically methylates the N4 position of cytidine in position 1402 (C1402) of 16S rRNA. The protein is Ribosomal RNA small subunit methyltransferase H of Shouchella clausii (strain KSM-K16) (Alkalihalobacillus clausii).